The sequence spans 205 residues: Imidazole glycerol phosphate synthase subunit HisH (205 aa).

A Glutamine amidotransferase type-1 domain is found at 3 to 205 (KIGLIDYGMG…LLRRWIKSIQ (203 aa)). C81 acts as the Nucleophile in catalysis. Active-site residues include H185 and E187.

As to quaternary structure, heterodimer of HisH and HisF.

It localises to the cytoplasm. It catalyses the reaction 5-[(5-phospho-1-deoxy-D-ribulos-1-ylimino)methylamino]-1-(5-phospho-beta-D-ribosyl)imidazole-4-carboxamide + L-glutamine = D-erythro-1-(imidazol-4-yl)glycerol 3-phosphate + 5-amino-1-(5-phospho-beta-D-ribosyl)imidazole-4-carboxamide + L-glutamate + H(+). The catalysed reaction is L-glutamine + H2O = L-glutamate + NH4(+). The protein operates within amino-acid biosynthesis; L-histidine biosynthesis; L-histidine from 5-phospho-alpha-D-ribose 1-diphosphate: step 5/9. Functionally, IGPS catalyzes the conversion of PRFAR and glutamine to IGP, AICAR and glutamate. The HisH subunit catalyzes the hydrolysis of glutamine to glutamate and ammonia as part of the synthesis of IGP and AICAR. The resulting ammonia molecule is channeled to the active site of HisF. This chain is Imidazole glycerol phosphate synthase subunit HisH, found in Prochlorococcus marinus subsp. pastoris (strain CCMP1986 / NIES-2087 / MED4).